Consider the following 511-residue polypeptide: MSNAPEQKNPQNDPSPAVSLNDQMKRRFEERTHLAEAGINPYPYKFDVTTTSKAIIDSFSDENPADVSVAGRIMAIRRMGKASFLHIQDSEGRIQIYLKKDDVGEASYNTFKLLDIGDIVGVSGFTFKTKTGEISVHARQFELLAKSLRPIPIAKEKEVDGQKVIYDAFSDRELRYRQRYVDLIVNPEVRGTFIKRTKIVALMRNYFASNGWLEVETPILQPIYGGAAARPFTTHHNALDMQLYLRIANELYLKRLIVGGFDGVFEFAKDFRNEGIDRFHNPEFTQVELYVAYKDYIWMMELVEDLLHKACVEVNGKDSTMFLGNEINLKPPFRRLTIADSIREYTGMEIRGKSEAQLRDIAKDLGLELDPKISSGKIIDEIFGEFVEPKLIQPTFITDYPEEMSPLAKKHRSEPGLVERFELIVGGKEVCNSFSELNDPVIQRERLEEQARLRQRGDDEAMIVDEDFLRALEYGMPPCAGLGIGIDRMVMLLTGQDSIRDVIFFPHMKPE.

Mg(2+) contacts are provided by Glu422 and Glu429.

The protein belongs to the class-II aminoacyl-tRNA synthetase family. Homodimer. The cofactor is Mg(2+).

The protein resides in the cytoplasm. It carries out the reaction tRNA(Lys) + L-lysine + ATP = L-lysyl-tRNA(Lys) + AMP + diphosphate. The polypeptide is Lysine--tRNA ligase (Chlorobaculum tepidum (strain ATCC 49652 / DSM 12025 / NBRC 103806 / TLS) (Chlorobium tepidum)).